Reading from the N-terminus, the 396-residue chain is Tryptophan synthase beta chain (396 aa).

The residue at position 86 (lysine 86) is an N6-(pyridoxal phosphate)lysine.

Belongs to the TrpB family. In terms of assembly, tetramer of two alpha and two beta chains. Pyridoxal 5'-phosphate is required as a cofactor.

It carries out the reaction (1S,2R)-1-C-(indol-3-yl)glycerol 3-phosphate + L-serine = D-glyceraldehyde 3-phosphate + L-tryptophan + H2O. The protein operates within amino-acid biosynthesis; L-tryptophan biosynthesis; L-tryptophan from chorismate: step 5/5. In terms of biological role, the beta subunit is responsible for the synthesis of L-tryptophan from indole and L-serine. The sequence is that of Tryptophan synthase beta chain from Yersinia enterocolitica serotype O:8 / biotype 1B (strain NCTC 13174 / 8081).